Here is a 238-residue protein sequence, read N- to C-terminus: Enoyl-CoA delta isomerase 3 (238 aa).

Belongs to the enoyl-CoA hydratase/isomerase family.

The protein localises to the cytoplasm. The protein resides in the nucleus. The enzyme catalyses a (3Z)-enoyl-CoA = a 4-saturated (2E)-enoyl-CoA. The catalysed reaction is a (3E)-enoyl-CoA = a 4-saturated (2E)-enoyl-CoA. Its pathway is lipid metabolism; fatty acid beta-oxidation. Able to isomerize both 3-cis and 3-trans double bonds into the 2-trans form in a range of enoyl-CoA species. Essential for the beta oxidation of unsaturated fatty acids. This is Enoyl-CoA delta isomerase 3 from Arabidopsis thaliana (Mouse-ear cress).